Consider the following 269-residue polypeptide: Cytochrome c oxidase subunit 3 (269 aa).

A run of 7 helical transmembrane segments spans residues glycine 7 to serine 29, isoleucine 51 to alanine 71, glycine 90 to leucine 110, valine 127 to alanine 147, threonine 167 to leucine 187, phenylalanine 205 to isoleucine 225, and isoleucine 247 to tryptophan 267.

The protein belongs to the cytochrome c oxidase subunit 3 family. As to quaternary structure, component of the cytochrome c oxidase (complex IV, CIV), a multisubunit enzyme composed of a catalytic core of 3 subunits and several supernumerary subunits. The complex exists as a monomer or a dimer and forms supercomplexes (SCs) in the inner mitochondrial membrane with ubiquinol-cytochrome c oxidoreductase (cytochrome b-c1 complex, complex III, CIII).

Its subcellular location is the mitochondrion inner membrane. The enzyme catalyses 4 Fe(II)-[cytochrome c] + O2 + 8 H(+)(in) = 4 Fe(III)-[cytochrome c] + 2 H2O + 4 H(+)(out). Component of the cytochrome c oxidase, the last enzyme in the mitochondrial electron transport chain which drives oxidative phosphorylation. The respiratory chain contains 3 multisubunit complexes succinate dehydrogenase (complex II, CII), ubiquinol-cytochrome c oxidoreductase (cytochrome b-c1 complex, complex III, CIII) and cytochrome c oxidase (complex IV, CIV), that cooperate to transfer electrons derived from NADH and succinate to molecular oxygen, creating an electrochemical gradient over the inner membrane that drives transmembrane transport and the ATP synthase. Cytochrome c oxidase is the component of the respiratory chain that catalyzes the reduction of oxygen to water. Electrons originating from reduced cytochrome c in the intermembrane space (IMS) are transferred via the dinuclear copper A center (CU(A)) of subunit 2 and heme A of subunit 1 to the active site in subunit 1, a binuclear center (BNC) formed by heme A3 and copper B (CU(B)). The BNC reduces molecular oxygen to 2 water molecules using 4 electrons from cytochrome c in the IMS and 4 protons from the mitochondrial matrix. The protein is Cytochrome c oxidase subunit 3 (COX3) of Candida parapsilosis (Yeast).